The chain runs to 317 residues: Melanocyte-stimulating hormone receptor (317 aa).

Topologically, residues 1–37 (MPMQGAQKRLLGSLNSTPTATPNLGLAANHTGAPCLE) are extracellular. Residue N29 is glycosylated (N-linked (GlcNAc...) asparagine). Residues 38-63 (VSIPDGLFLSLGLVSLVENVLVVAAI) form a helical membrane-spanning segment. Residues 64 to 72 (AKNRNLHSP) lie on the Cytoplasmic side of the membrane. A helical transmembrane segment spans residues 73-93 (MYCFICCLALSDLLVSSSNML). The Extracellular portion of the chain corresponds to 94–118 (ETAVILLLEAGALATRASVVQQLQN). A helical transmembrane segment spans residues 119-140 (TIDVLTCSSMLCSLCFLGAIAV). Residues 141–163 (DRHVSIFYALRYHSIMTLARARR) are Cytoplasmic-facing. Residues 164 to 183 (AIAAIWVASVLSSTLFIAYC) form a helical membrane-spanning segment. The Extracellular portion of the chain corresponds to 184–191 (DHAXVLLC). Residues 192–211 (LVVFFLAMLVLMAVLYVHML) form a helical membrane-spanning segment. The Cytoplasmic portion of the chain corresponds to 212 to 240 (ARACQHAQGITRLHQRQPPAHQGFGFRGA). Residues 241–266 (ATLTILLGIFFLCWGPFFLHLTLVVL) traverse the membrane as a helical segment. Over 267–279 (CPQHLTCSCIFKN) the chain is Extracellular. A helical transmembrane segment spans residues 280-300 (FKVFLTLIICSTIIDPLIYAF). The Cytoplasmic segment spans residues 301–317 (RSQELRRTLKELLLCSW). C315 is lipidated: S-palmitoyl cysteine.

Belongs to the G-protein coupled receptor 1 family. In terms of assembly, interacts with MGRN1, but does not undergo MGRN1-mediated ubiquitination; this interaction competes with GNAS-binding and thus inhibits agonist-induced cAMP production. Interacts with OPN3; the interaction results in a decrease in MC1R-mediated cAMP signaling and ultimately a decrease in melanin production in melanocytes.

It is found in the cell membrane. Receptor for MSH (alpha, beta and gamma) and ACTH. The activity of this receptor is mediated by G proteins which activate adenylate cyclase. Mediates melanogenesis, the production of eumelanin (black/brown) and phaeomelanin (red/yellow), via regulation of cAMP signaling in melanocytes. In Ateles paniscus (Black spider monkey), this protein is Melanocyte-stimulating hormone receptor (MC1R).